A 351-amino-acid chain; its full sequence is Prostaglandin reductase 2 (351 aa).

Position 99 to 100 (99 to 100) interacts with substrate; sequence FY. Residues 165-168, K192, Y208, N231, 253-259, 287-289, and N337 contribute to the NADP(+) site; these read GACG, CGQISQY, and FLV. 288 to 290 contributes to the substrate binding site; it reads LVL.

The protein belongs to the NADP-dependent oxidoreductase L4BD family. Monomer.

It localises to the cytoplasm. The enzyme catalyses 13,14-dihydro-15-oxo-prostaglandin E2 + NAD(+) = 15-oxoprostaglandin E2 + NADH + H(+). It catalyses the reaction 13,14-dihydro-15-oxo-prostaglandin E2 + NADP(+) = 15-oxoprostaglandin E2 + NADPH + H(+). It carries out the reaction 13,14-dihydro-15-oxo-PGF2alpha + NADP(+) = 15-oxoprostaglandin F2alpha + NADPH + H(+). The catalysed reaction is 13,14-dihydro-15-oxo-prostaglandin E1 + NADP(+) = 15-oxoprostaglandin E1 + NADPH + H(+). The enzyme catalyses 13,14-dihydro-15-oxo-prostaglandin F1alpha + NADP(+) = 15-oxoprostaglandin F1alpha + NADPH + H(+). Its function is as follows. Functions as 15-oxo-prostaglandin 13-reductase and acts on 15-keto-PGE1, 15-keto-PGE2, 15-keto-PGE1-alpha and 15-keto-PGE2-alpha with highest activity towards 15-keto-PGE2. Overexpression represses transcriptional activity of PPARG and inhibits adipocyte differentiation. The sequence is that of Prostaglandin reductase 2 (PTGR2) from Pongo abelii (Sumatran orangutan).